The chain runs to 139 residues: UPF0102 protein Caul_0175 (139 aa).

The protein belongs to the UPF0102 family.

The polypeptide is UPF0102 protein Caul_0175 (Caulobacter sp. (strain K31)).